The chain runs to 106 residues: Replication protein A 14 kDa subunit B (106 aa).

Residue M1 is modified to N-acetylmethionine.

It belongs to the replication factor A protein 3 family. Component of the heterotrimeric canonical replication protein A complex (RPA).

It is found in the nucleus. Functionally, as part of the replication protein A (RPA/RP-A), a single-stranded DNA-binding heterotrimeric complex, may play an essential role in DNA replication, recombination and repair. Binds and stabilizes single-stranded DNA intermediates, preventing complementary DNA reannealing and recruiting different proteins involved in DNA metabolism. The protein is Replication protein A 14 kDa subunit B (RPA3B) of Arabidopsis thaliana (Mouse-ear cress).